We begin with the raw amino-acid sequence, 838 residues long: MNYDLFSAQKKVEYLDKLRIERALSGSSGEFQHVFQLLTLLLHINHPNLPGYVADAPVGIADFVISPYQKQYLLTTVPSLEANQSLLPSFSYRSTNAILGVYVMGSIASISQTPKSDLDTWVCHRDDLSTKEKEALQRKTHLLKNWAKQFNIEINFYLMDQKRFRCFRYAEPLTAENCGSAQYMLLLDEFYRSAIRLAGKPLLWLHLLIEQEENYESEVERLVRTQQICLDDWVDFGGLGQLSANEYFGASLWQLYKGIDAPYKSVIKILLLETYSSEYPNTYLIARQFKEELLTGKLNPSHHFDPYLAMLQRATRYLTKHNELKRLGFVRRSVYLKATEGMCWQDPNATNNWRLQHLQKLIQEWDWSDALIEELNQRANWKIKQVKKAHNSLIKFLMLSYRNLVAFARKHKVNSSIMPQDISVLTRKLYTAFEELPGKITLLNPQISLNLSEKNLLFFEVKGSKTFKDGWYVVNQTPSVAGFVQKRYTEYSESLNKLVAWAYFNRILTANTDLHIISPNVSLTTLRHFVTDLRLSFPVTVSSVTNEDLTHACEIRSLIVAVNLTVDPTKKITQVKSRIQASDLFSFGPKEESLVGSIDITYRNLWNEIRTLHFEGPNAILLALKVLSNKIHRGAPSPKLIQVFSYSHRYRRTLSNIVTALINRCISIQIGDALPPQNNLLRVAGKNWQFFFEERGISLQEIHSNEELEATGFDTALQTEVEEKESALPDTSRTYPPEIDHFASEGFLQFFFEDNSDGSFNVYILDEANRIEIYRNCDGQKEKKILEINHIYQSSGLDENNNPYKIVQRDFNYPQFYQLLLQENGVKIVPFHSRLAMS.

A catalytic region spans residues 1–541 (MNYDLFSAQK…DLRLSFPVTV (541 aa)). A regulatory region spans residues 547-838 (EDLTHACEIR…VPFHSRLAMS (292 aa)).

This sequence belongs to the adenylyl cyclase class-1 family.

It is found in the cytoplasm. It carries out the reaction ATP = 3',5'-cyclic AMP + diphosphate. This chain is Adenylate cyclase (cya), found in Pasteurella multocida (strain Pm70).